A 366-amino-acid polypeptide reads, in one-letter code: MSMNSSKQPVSPAAGLIANTTCQTENRLSVFFSIIFMTVGILSNSLAIAILMKAYQRFRQKSKASFLLLASGLVITDFFGHLINGGIAVFVYASDKDWIRFDQSNILCSIFGISMVFSGLCPLFLGSAMAIERCIGVTNPIFHSTKITSKHVKMILSGVCMFAVFVAVLPILGHRDYQIQASRTWCFYNTEHIEDWEDRFYLLFFSFLGLLALGVSFSCNAVTGVTLLRVKFRSQQHRQGRSHHLEMIIQLLAIMCVSCVCWSPFLVTMANIAINGNNSPVTCETTLFALRMATWNQILDPWVYILLRKAVLRNLYKLASRCCGVNIISLHIWELSSIKNSLKVAAISESPAAEKESQQASSEAGL.

Residues 1 to 31 (MSMNSSKQPVSPAAGLIANTTCQTENRLSVF) lie on the Extracellular side of the membrane. 2 N-linked (GlcNAc...) asparagine glycosylation sites follow: asparagine 4 and asparagine 19. The helical transmembrane segment at 32-55 (FSIIFMTVGILSNSLAIAILMKAY) threads the bilayer. Residues 56–69 (QRFRQKSKASFLLL) are Cytoplasmic-facing. Residues 70 to 90 (ASGLVITDFFGHLINGGIAVF) traverse the membrane as a helical segment. The Extracellular portion of the chain corresponds to 91–109 (VYASDKDWIRFDQSNILCS). Residues cysteine 108 and cysteine 186 are joined by a disulfide bond. The helical transmembrane segment at 110–131 (IFGISMVFSGLCPLFLGSAMAI) threads the bilayer. Over 132-152 (ERCIGVTNPIFHSTKITSKHV) the chain is Cytoplasmic. The chain crosses the membrane as a helical span at residues 153–175 (KMILSGVCMFAVFVAVLPILGHR). The Extracellular segment spans residues 176-198 (DYQIQASRTWCFYNTEHIEDWED). A helical membrane pass occupies residues 199 to 224 (RFYLLFFSFLGLLALGVSFSCNAVTG). The Cytoplasmic segment spans residues 225–250 (VTLLRVKFRSQQHRQGRSHHLEMIIQ). A helical membrane pass occupies residues 251–267 (LLAIMCVSCVCWSPFLV). The Extracellular segment spans residues 268–285 (TMANIAINGNNSPVTCET). Residues 286–307 (TLFALRMATWNQILDPWVYILL) traverse the membrane as a helical segment. Over 308 to 366 (RKAVLRNLYKLASRCCGVNIISLHIWELSSIKNSLKVAAISESPAAEKESQQASSEAGL) the chain is Cytoplasmic.

It belongs to the G-protein coupled receptor 1 family.

Its subcellular location is the cell membrane. In terms of biological role, receptor for prostaglandin F2-alpha (PGF2-alpha). The activity of this receptor is mediated by G proteins which activate a phosphatidylinositol-calcium second messenger system. Initiates luteolysis in the corpus luteum. This Mus musculus (Mouse) protein is Prostaglandin F2-alpha receptor (Ptgfr).